We begin with the raw amino-acid sequence, 435 residues long: GTPase Der (435 aa).

EngA-type G domains are found at residues 4 to 167 (PVVA…PAEK) and 175 to 350 (ISFS…DNQN). Residues 10-17 (GQPNVGKS), 57-61 (DTGGI), 119-122 (NKAD), 181-188 (GRPNVGKS), 228-232 (DTAGI), and 293-296 (NKWD) contribute to the GTP site. Residues 351-435 (QRIQSSVLND…PIKILPRKRK (85 aa)) form the KH-like domain.

The protein belongs to the TRAFAC class TrmE-Era-EngA-EngB-Septin-like GTPase superfamily. EngA (Der) GTPase family. As to quaternary structure, associates with the 50S ribosomal subunit.

Functionally, GTPase that plays an essential role in the late steps of ribosome biogenesis. This chain is GTPase Der, found in Lactobacillus acidophilus (strain ATCC 700396 / NCK56 / N2 / NCFM).